The chain runs to 345 residues: rRNA 2'-O-methyltransferase fibrillarin (345 aa).

The disordered stretch occupies residues 1–114 (MGKPGFSPRG…GFKGGKTVTI (114 aa)). The segment covering 8-108 (PRGGGGGGGG…RGGGAGGFKG (101 aa)) has biased composition (gly residues). Arg9, Arg23, Arg25, Arg41, Arg43, Arg49, Arg52, Arg59, Arg64, Arg72, Arg78, Arg84, Arg89, Arg94, and Arg99 each carry asymmetric dimethylarginine. S-adenosyl-L-methionine contacts are provided by residues 198 to 199 (TT), 217 to 218 (EF), 242 to 243 (DA), and 262 to 265 (DVAQ).

This sequence belongs to the methyltransferase superfamily. Fibrillarin family. In terms of assembly, component of box C/D small nucleolar ribonucleoprotein (snoRNP) particles. It is associated with the U3, U8 and U13 small nuclear RNAs. Post-translationally, by homology to other fibrillarins, some or all of the N-terminal domain arginines are modified to asymmetric dimethylarginine (DMA).

It localises to the nucleus. The protein resides in the nucleolus. The enzyme catalyses L-glutaminyl-[histone H2A] + S-adenosyl-L-methionine = N(5)-methyl-L-glutaminyl-[histone H2A] + S-adenosyl-L-homocysteine + H(+). Its function is as follows. S-adenosyl-L-methionine-dependent methyltransferase that has the ability to methylate both RNAs and proteins. Involved in pre-rRNA processing. Utilizes the methyl donor S-adenosyl-L-methionine to catalyze the site-specific 2'-hydroxyl methylation of ribose moieties in pre-ribosomal RNA. Site specificity is provided by a guide RNA that base pairs with the substrate. Methylation occurs at a characteristic distance from the sequence involved in base pairing with the guide RNA. Also acts as a protein methyltransferase by mediating methylation of 'Gln-105' of histone H2A (H2AQ105me), a modification that impairs binding of the FACT complex and is specifically present at 35S ribosomal DNA locus. The protein is rRNA 2'-O-methyltransferase fibrillarin of Drosophila erecta (Fruit fly).